A 59-amino-acid polypeptide reads, in one-letter code: Small ribosomal subunit protein bS21 (59 aa).

Positions 32 to 42 (VRKREHYDKPS) are enriched in basic and acidic residues. The tract at residues 32-59 (VRKREHYDKPSVKRKKKAEAARRKNAKK) is disordered. The segment covering 43-59 (VKRKKKAEAARRKNAKK) has biased composition (basic residues).

It belongs to the bacterial ribosomal protein bS21 family.

This Clostridioides difficile (strain 630) (Peptoclostridium difficile) protein is Small ribosomal subunit protein bS21.